The sequence spans 910 residues: Protein CHROMATIN REMODELING 25 (910 aa).

Acidic residues-rich tracts occupy residues 1 to 18 (MEEE…DDSS) and 26 to 39 (QDSE…ECED). The interval 1–39 (MEEEDEEILSSSDCDDSSDSYKDDSQDSEGENDNPECED) is disordered. The Helicase ATP-binding domain maps to 198-371 (LHGSANINGC…FAMVNFTNPG (174 aa)). 211 to 218 (DDMGLGKT) contacts ATP. A DEAH box motif is present at residues 322–325 (DEAH). Positions 396-417 (TEEEKNLAADRSAELSSKVNQF) form a coiled coil. The Helicase C-terminal domain maps to 538–696 (VLSRLLANLR…QTDNSTRQGN (159 aa)). Residues 828–861 (VSPKTVESEEHNRNQPVNKRAFNKPQQRPREPLQ) are disordered.

This sequence belongs to the SNF2/RAD54 helicase family. As to quaternary structure, interacts with RAD51. Binds to the geminivirus mungbean yellow mosaic virus (MYMV) and to the tomato leaf curl virus (ToLCV) replication-associated proteins. Expressed ubiquitously, with the highest levels of expression in flower buds. Present in flower buds (at protein level).

It is found in the nucleus. Dissociates RAD51 from nucleoprotein filaments formed on dsDNA. Could be involved in the turnover of RAD51 protein-dsDNA filaments. Addition of RAD54 overcomes inhibition of DNA strand exchange by RAD51 bound to substrate dsDNA. Species preference in the RAD51 dissociation and DNA strand exchange assays underlines the importance of specific RAD54-RAD51 interactions. RAD51 is unable to release dsDNA upon ATP hydrolysis, leaving it stuck on the heteroduplex DNA product after DNA strand exchange. Involved in DNA repair and mitotic recombination. Functions in the homologous recombinational DNA repair (RAD52) pathway. Required for synthesis-dependent strand annealing (SDSA) during double-strand break repair. Functionally, facilitates geminiviral replication (e.g. geminivirus mungbean yellow mosaic virus (MYMV) and tomato leaf curl virus (ToLCV)). This chain is Protein CHROMATIN REMODELING 25 (CHR25), found in Arabidopsis thaliana (Mouse-ear cress).